The primary structure comprises 381 residues: Chaperone protein DnaJ (381 aa).

The region spanning 5–73 (DYYEVLGVGK…EKKAAYDQYG (69 aa)) is the J domain. The CR-type zinc finger occupies 141–219 (GHEAQIRVPH…CHGQGKLKSQ (79 aa)). Zn(2+) contacts are provided by Cys154, Cys157, Cys171, Cys174, Cys193, Cys196, Cys207, and Cys210. CXXCXGXG motif repeat units lie at residues 154–161 (CDHCHGNG), 171–178 (CPTCHGAG), 193–200 (CPKCHGSG), and 207–214 (CTKCHGQG). The segment at 357-381 (SVHEGGSRHSPQEQSWLDKVKSFFS) is disordered.

This sequence belongs to the DnaJ family. Homodimer. Zn(2+) is required as a cofactor.

It localises to the cytoplasm. Its function is as follows. Participates actively in the response to hyperosmotic and heat shock by preventing the aggregation of stress-denatured proteins and by disaggregating proteins, also in an autonomous, DnaK-independent fashion. Unfolded proteins bind initially to DnaJ; upon interaction with the DnaJ-bound protein, DnaK hydrolyzes its bound ATP, resulting in the formation of a stable complex. GrpE releases ADP from DnaK; ATP binding to DnaK triggers the release of the substrate protein, thus completing the reaction cycle. Several rounds of ATP-dependent interactions between DnaJ, DnaK and GrpE are required for fully efficient folding. Also involved, together with DnaK and GrpE, in the DNA replication of plasmids through activation of initiation proteins. This is Chaperone protein DnaJ from Cupriavidus necator (strain ATCC 17699 / DSM 428 / KCTC 22496 / NCIMB 10442 / H16 / Stanier 337) (Ralstonia eutropha).